The chain runs to 107 residues: Large ribosomal subunit protein uL24 (107 aa).

This sequence belongs to the universal ribosomal protein uL24 family. As to quaternary structure, part of the 50S ribosomal subunit.

Its function is as follows. One of two assembly initiator proteins, it binds directly to the 5'-end of the 23S rRNA, where it nucleates assembly of the 50S subunit. Functionally, one of the proteins that surrounds the polypeptide exit tunnel on the outside of the subunit. The polypeptide is Large ribosomal subunit protein uL24 (Thermoanaerobacter pseudethanolicus (strain ATCC 33223 / 39E) (Clostridium thermohydrosulfuricum)).